The sequence spans 81 residues: Acylphosphatase (81 aa).

The Acylphosphatase-like domain occupies 1-81 (MYIFHGRVQG…VKYNDFQIRY (81 aa)). Residues arginine 14 and asparagine 32 contribute to the active site.

This sequence belongs to the acylphosphatase family.

The catalysed reaction is an acyl phosphate + H2O = a carboxylate + phosphate + H(+). The chain is Acylphosphatase (acyP) from Picrophilus torridus (strain ATCC 700027 / DSM 9790 / JCM 10055 / NBRC 100828 / KAW 2/3).